A 240-amino-acid chain; its full sequence is HTH-type transcriptional repressor STM4068 (240 aa).

Positions 9–77 constitute an HTH gntR-type domain; the sequence is TPLYKQLFFI…RGSGSVVCSV (69 aa). The segment at residues 37–56 is a DNA-binding region (H-T-H motif); sequence QKEIARSYNVSLIVVKQAWS.

Its function is as follows. Represses the expression of the STM4065-STM4067 operon. This Salmonella typhimurium (strain LT2 / SGSC1412 / ATCC 700720) protein is HTH-type transcriptional repressor STM4068.